The chain runs to 431 residues: Gamma-glutamyl phosphate reductase (431 aa).

This sequence belongs to the gamma-glutamyl phosphate reductase family.

The protein resides in the cytoplasm. The enzyme catalyses L-glutamate 5-semialdehyde + phosphate + NADP(+) = L-glutamyl 5-phosphate + NADPH + H(+). The protein operates within amino-acid biosynthesis; L-proline biosynthesis; L-glutamate 5-semialdehyde from L-glutamate: step 2/2. Its function is as follows. Catalyzes the NADPH-dependent reduction of L-glutamate 5-phosphate into L-glutamate 5-semialdehyde and phosphate. The product spontaneously undergoes cyclization to form 1-pyrroline-5-carboxylate. This chain is Gamma-glutamyl phosphate reductase, found in Beijerinckia indica subsp. indica (strain ATCC 9039 / DSM 1715 / NCIMB 8712).